The primary structure comprises 119 residues: Insulin growth factor-like family member 2 (119 aa).

Positions 1–25 (MVPRIFAPAYVSVCLLLLCPREVIA) are cleaved as a signal peptide.

The protein belongs to the IGFL family. In terms of tissue distribution, detected in cerebellum, heart, placenta, spleen, stomach, testis and thymus.

The protein localises to the secreted. In terms of biological role, potential ligand of the IGFLR1 cell membrane receptor. This Homo sapiens (Human) protein is Insulin growth factor-like family member 2 (IGFL2).